The sequence spans 251 residues: Gamma-glutamyl peptidase 4 (251 aa).

Residues 16–213 (SEFAKKTYGG…IDRVLAGGHI (198 aa)) form the Glutamine amidotransferase type-1 domain. Cys-100 (nucleophile) is an active-site residue. Active-site residues include His-192 and Glu-194.

The protein belongs to the peptidase C26 family.

It is found in the cytoplasm. The protein localises to the cytosol. It participates in secondary metabolite biosynthesis. Its function is as follows. Involved in glucosinolate biosynthesis. Hydrolyzes the gamma-glutamyl peptide bond of several glutathione (GSH) conjugates to produce Cys-Gly conjugates related to glucosinolates. The gamma-Glu-Cys-Gly-GSH conjugates are the sulfur-donating molecule in glucosinolate biosynthesis. This Arabidopsis thaliana (Mouse-ear cress) protein is Gamma-glutamyl peptidase 4.